Reading from the N-terminus, the 209-residue chain is Orotate phosphoribosyltransferase (209 aa).

5-phospho-alpha-D-ribose 1-diphosphate contacts are provided by residues Arg-96, Lys-100, His-102, and 122–130 (EDLISTGGS). Position 126 (Ser-126) interacts with orotate.

The protein belongs to the purine/pyrimidine phosphoribosyltransferase family. PyrE subfamily. As to quaternary structure, homodimer. It depends on Mg(2+) as a cofactor.

The enzyme catalyses orotidine 5'-phosphate + diphosphate = orotate + 5-phospho-alpha-D-ribose 1-diphosphate. Its pathway is pyrimidine metabolism; UMP biosynthesis via de novo pathway; UMP from orotate: step 1/2. In terms of biological role, catalyzes the transfer of a ribosyl phosphate group from 5-phosphoribose 1-diphosphate to orotate, leading to the formation of orotidine monophosphate (OMP). The sequence is that of Orotate phosphoribosyltransferase from Cytophaga hutchinsonii (strain ATCC 33406 / DSM 1761 / CIP 103989 / NBRC 15051 / NCIMB 9469 / D465).